A 426-amino-acid chain; its full sequence is MESLTLQPIELISGEVNLPGSKSVSNRALLLAALASGTTRLTNLLDSDDIRHMLNALTKLGVNYRLSADKTTCEVEGLGQAFHTTQPLELFLGNAGTAMRPLAAALCLGQGDYVLTGEPRMKERPIGHLVDALRQAGAQIEYLEQENFPPLRIQGTGLQAGTVTIDGSISSQFLTAFLMSAPLAQGKVTIKIVGELVSKPYIDITLHIMEQFGVQVINHDYQEFVIPAGQSYVSPGQFLVEGDASSASYFLAAAAIKGGEVKVTGIGKNSIQGDIQFADALEKMGAQIEWGDDYVIARRGELNAVDLDFNHIPDAAMTIATTALFAKGTTAIRNVYNWRVKETDRLAAMATELRKVGATVEEGEDFIVITPPTKLIHAAIDTYDDHRMAMCFSLVALSDTPVTINDPKCTSKTFPDYFDKFAQLSR.

The 3-phosphoshikimate site is built by lysine 22, serine 23, and arginine 27. Lysine 22 is a binding site for phosphoenolpyruvate. Positions 96 and 124 each coordinate phosphoenolpyruvate. 2 residues coordinate 3-phosphoshikimate: serine 170 and serine 171. Glutamine 172 serves as a coordination point for phosphoenolpyruvate. 3-phosphoshikimate contacts are provided by serine 198, aspartate 314, asparagine 337, and lysine 341. The active-site Proton acceptor is aspartate 314. Positions 345, 387, and 412 each coordinate phosphoenolpyruvate.

This sequence belongs to the EPSP synthase family. Homotetramer.

The protein localises to the cytoplasm. It catalyses the reaction 3-phosphoshikimate + phosphoenolpyruvate = 5-O-(1-carboxyvinyl)-3-phosphoshikimate + phosphate. Its pathway is metabolic intermediate biosynthesis; chorismate biosynthesis; chorismate from D-erythrose 4-phosphate and phosphoenolpyruvate: step 6/7. In terms of biological role, catalyzes the transfer of the enolpyruvyl moiety of phosphoenolpyruvate (PEP) to the 5-hydroxyl of shikimate-3-phosphate (S3P) to produce enolpyruvyl shikimate-3-phosphate and inorganic phosphate. This is 3-phosphoshikimate 1-carboxyvinyltransferase from Vibrio cholerae serotype O1 (strain ATCC 39315 / El Tor Inaba N16961).